Here is a 149-residue protein sequence, read N- to C-terminus: Azurin (149 aa).

An N-terminal signal peptide occupies residues 1–20 (MLAKATLAIVLSAASLPVLA). One can recognise a Plastocyanin-like domain in the interval 21-149 (AQCEATIESN…MMKGTLKLSN (129 aa)). Cysteine 23 and cysteine 46 are disulfide-bonded. Residues histidine 66, cysteine 132, histidine 137, and methionine 141 each contribute to the Cu cation site.

The protein localises to the periplasm. Functionally, transfers electrons from cytochrome c551 to cytochrome oxidase. In Achromobacter denitrificans (Alcaligenes denitrificans), this protein is Azurin (azu).